Reading from the N-terminus, the 517-residue chain is GMP synthase [glutamine-hydrolyzing] (517 aa).

The region spanning 11-202 (KIIVLDFGSQ…AFNVCDAKAN (192 aa)) is the Glutamine amidotransferase type-1 domain. C88 acts as the Nucleophile in catalysis. Residues H176 and E178 contribute to the active site. In terms of domain architecture, GMPS ATP-PPase spans 203 to 392 (WTMDDFIEMQ…LGIPHDLVWR (190 aa)). 230–236 (SGGVDSS) contacts ATP.

Homodimer.

It catalyses the reaction XMP + L-glutamine + ATP + H2O = GMP + L-glutamate + AMP + diphosphate + 2 H(+). It participates in purine metabolism; GMP biosynthesis; GMP from XMP (L-Gln route): step 1/1. Its function is as follows. Catalyzes the synthesis of GMP from XMP. The polypeptide is GMP synthase [glutamine-hydrolyzing] (Lactobacillus gasseri (strain ATCC 33323 / DSM 20243 / BCRC 14619 / CIP 102991 / JCM 1131 / KCTC 3163 / NCIMB 11718 / NCTC 13722 / AM63)).